A 131-amino-acid chain; its full sequence is MAKANTASRVRKKVRKTVSEGIVHVHASFNNTIITITDRQGNALSWATSGGAGFKGSRKSTPFAAQVAAEAAGKVAQEYGVKNLEVRIKGPGPGRESSVRALNALGFKITSITDVTPLPHNGCRPPKKRRI.

This sequence belongs to the universal ribosomal protein uS11 family. As to quaternary structure, part of the 30S ribosomal subunit. Interacts with proteins S7 and S18. Binds to IF-3.

Its function is as follows. Located on the platform of the 30S subunit, it bridges several disparate RNA helices of the 16S rRNA. Forms part of the Shine-Dalgarno cleft in the 70S ribosome. The sequence is that of Small ribosomal subunit protein uS11 from Neisseria gonorrhoeae (strain ATCC 700825 / FA 1090).